The primary structure comprises 93 residues: Small ribosomal subunit protein uS15 (93 aa).

It belongs to the universal ribosomal protein uS15 family. As to quaternary structure, part of the 30S ribosomal subunit. Forms a bridge to the 50S subunit in the 70S ribosome, contacting the 23S rRNA.

In terms of biological role, one of the primary rRNA binding proteins, it binds directly to 16S rRNA where it helps nucleate assembly of the platform of the 30S subunit by binding and bridging several RNA helices of the 16S rRNA. Forms an intersubunit bridge (bridge B4) with the 23S rRNA of the 50S subunit in the ribosome. This chain is Small ribosomal subunit protein uS15, found in Anaplasma marginale (strain Florida).